The sequence spans 424 residues: Serine--tRNA ligase (424 aa).

Positions 1–15 (MIDPKLLRTDPDAVR) are enriched in basic and acidic residues. A disordered region spans residues 1 to 27 (MIDPKLLRTDPDAVRRSQAARGEDSSV). An L-serine-binding site is contributed by 230–232 (TSE). ATP is bound by residues 261-263 (RRE) and valine 277. An L-serine-binding site is contributed by glutamate 284. 348–351 (EITS) is an ATP binding site. L-serine is bound at residue threonine 382.

The protein belongs to the class-II aminoacyl-tRNA synthetase family. Type-1 seryl-tRNA synthetase subfamily. In terms of assembly, homodimer. The tRNA molecule binds across the dimer.

It is found in the cytoplasm. The enzyme catalyses tRNA(Ser) + L-serine + ATP = L-seryl-tRNA(Ser) + AMP + diphosphate + H(+). The catalysed reaction is tRNA(Sec) + L-serine + ATP = L-seryl-tRNA(Sec) + AMP + diphosphate + H(+). It participates in aminoacyl-tRNA biosynthesis; selenocysteinyl-tRNA(Sec) biosynthesis; L-seryl-tRNA(Sec) from L-serine and tRNA(Sec): step 1/1. Functionally, catalyzes the attachment of serine to tRNA(Ser). Is also able to aminoacylate tRNA(Sec) with serine, to form the misacylated tRNA L-seryl-tRNA(Sec), which will be further converted into selenocysteinyl-tRNA(Sec). The chain is Serine--tRNA ligase from Cutibacterium acnes (strain DSM 16379 / KPA171202) (Propionibacterium acnes).